The chain runs to 205 residues: Large ribosomal subunit protein uL4 (205 aa).

This sequence belongs to the universal ribosomal protein uL4 family. In terms of assembly, part of the 50S ribosomal subunit. Contacts proteins L15 and L34.

One of the primary rRNA binding proteins, this protein initially binds near the 5'-end of the 23S rRNA. It is important during the early stages of 50S assembly. In terms of biological role, makes multiple contacts with different domains of the 23S rRNA in the assembled 50S subunit. Its function is as follows. This protein is located close to the polypeptide exit tunnel, and interacts with the modified macrolide azithromycin, which blocks the tunnel. The protein is Large ribosomal subunit protein uL4 (rplD) of Deinococcus radiodurans (strain ATCC 13939 / DSM 20539 / JCM 16871 / CCUG 27074 / LMG 4051 / NBRC 15346 / NCIMB 9279 / VKM B-1422 / R1).